The chain runs to 615 residues: MLRRPKVSPELDPSTLSNYGDFIVHKTQLDLAVDFDKNRVSSCVSLNVTNRTNTHQVVLDSSYLVIHSASINGISTPFDVAERQTLGSKVTIKIPPEMKISELTITIESETTYECTALQFLPAEATDGGVGPYLFSQCQAIHARSLFPCFDTPAVKCPYEMSVTSPYPSVMSGRPLGVSGNMYRFSQPVPIPSYLVAVASGDIKSAPIGPRSSVYCEPLKLEVCQHEFQADMEHFLQAAESLVFKYEWERYDALVLPSSFPYGGMENPNITFVTPTLISGDRENVDVIAHELAHSWSGNLVTNCSWEHFWLNEGWTVYLERRILGKLHGNATRDFSAIIGWTDLENSIAAMGPSAERWSMLVHNLKDGSDPDDAFSTVPYEKGSTLLYHIETLIGQEKFDKFIPHYFHTFRYKSLDTYQFIDCLYSFFADFKSVLDTIDWESWLYKPGMPPVKPDFDTSMVDQCYQLADKWYHHSLKNKFHKFSSEDIKSFTANQSVVFLDTLIAFDKLDFKWKHHLDALNTMASVYQEYSKSTNAEVLFRWYVLQVTGHNQEYYSRLGEWLGTVGRMKFVRPGYVLLNKVDRSMALHYFEKFHNRYHAICKSMVRRDWDLIKTK.

Substrate-binding positions include 137 to 139 (QCQ) and 261 to 266 (PYGGME). Zn(2+) is bound at residue His290. The active-site Proton acceptor is Glu291. Zn(2+)-binding residues include His294 and Glu313. Tyr380 acts as the Proton donor in catalysis.

The protein belongs to the peptidase M1 family. It depends on Zn(2+) as a cofactor.

The protein localises to the cytoplasm. The protein resides in the nucleus. It carries out the reaction an epoxide + H2O = an ethanediol. Aminopeptidase that preferentially cleaves di- and tripeptides. Also has low epoxide hydrolase activity (in vitro). Can hydrolyze the epoxide leukotriene LTA(4) but it forms preferentially 5,6-dihydroxy-7,9,11,14-eicosatetraenoic acid rather than the cytokine leukotriene B(4) as the product compared to the homologous mammalian enzyme (in vitro). This is Leucine aminopeptidase 2-1 from Meyerozyma guilliermondii (strain ATCC 6260 / CBS 566 / DSM 6381 / JCM 1539 / NBRC 10279 / NRRL Y-324) (Yeast).